The primary structure comprises 288 residues: 2-hydroxy-6-oxononadienedioate/2-hydroxy-6-oxononatrienedioate hydrolase (288 aa).

His267 serves as the catalytic Proton acceptor.

It belongs to the AB hydrolase superfamily. MhpC family. Homodimer.

It catalyses the reaction (2Z,4E)-2-hydroxy-6-oxonona-2,4-dienedioate + H2O = (2Z)-2-hydroxypenta-2,4-dienoate + succinate + H(+). It carries out the reaction (2Z,4E,7E)-2-hydroxy-6-oxonona-2,4,7-trienedioate + H2O = (2Z)-2-hydroxypenta-2,4-dienoate + fumarate + H(+). It functions in the pathway aromatic compound metabolism; 3-phenylpropanoate degradation. Catalyzes the cleavage of the C5-C6 bond of 2-hydroxy-6-oxononadienedioate and 2-hydroxy-6-oxononatrienedioate, a dienol ring fission product of the bacterial meta-cleavage pathway for degradation of phenylpropionic acid. The polypeptide is 2-hydroxy-6-oxononadienedioate/2-hydroxy-6-oxononatrienedioate hydrolase (Klebsiella pneumoniae subsp. pneumoniae (strain ATCC 700721 / MGH 78578)).